The following is a 471-amino-acid chain: MALNKSMHPRNRYKDKPPDFVYLASKYPEFQKHVQTTLTGRVTLNFKDPEAVRALTCTLLKEDFGLTIEIPLERLIPTVPLRLNYIHWVEDLIGGQGNPQRGIDIGTGASCIYPLLGATMNGWFFLATEVDDICFNYAKKNVEQNHLAELIKVVKVPQKTLLMDALKEESIVYDFCMCNPPFFANQLEAKGVNSRNSRRPPPSSINTGGVTEIMAEGGELEFVKRVIHDSLQLKKRLRWYSCMLGKKCSLAPLKDELRKQGVAKVTHTEFCQGRTMRWALAWSFYDDVPVPSPPCKKRKLEKARKPLTFTVLKATVAELQAQTPHSSPTESVSAWLENILTDLKVLHKRVPGGEVELSLFLTAVENTWIHSRQKRREQGRHLRELPRAQEPPSEETSVTEQQQQPDIPPESPANAEALQHFLFKCLVNVKQEEEKDVLVEMHWVEGQNKDLMNQLCTCLKNALFRQVAKPT.

Positions 17-20 (PPDF) are RNA-binding. Positions 82, 106, 110, 129, 160, and 179 each coordinate S-adenosyl-L-methionine. Positions 159-163 (KTLLM) are K-loop. RNA-binding regions lie at residues 194 to 206 (SRNS…SSIN), 245 to 249 (GKKCS), and 272 to 278 (QGRTMRW). VCR stretches follow at residues 284 to 390 (FYDD…RAQE) and 421 to 470 (FLFK…VAKP). A disordered region spans residues 375 to 412 (RREQGRHLRELPRAQEPPSEETSVTEQQQQPDIPPESP).

It belongs to the methyltransferase superfamily. METTL16/RlmF family.

It localises to the nucleus. The protein localises to the cytoplasm. It carries out the reaction adenosine in U6 snRNA + S-adenosyl-L-methionine = N(6)-methyladenosine in U6 snRNA + S-adenosyl-L-homocysteine + H(+). The catalysed reaction is an adenosine in mRNA + S-adenosyl-L-methionine = an N(6)-methyladenosine in mRNA + S-adenosyl-L-homocysteine + H(+). Methyltransferase activity is autoinhibited by the K-loop region that blocks S-adenosyl-L-methionine-binding. Upon activation, K-loop changes conformation, allowing S-adenosyl-L-methionine-binding and subsequent methyltransferase activity. mRNA N6-adenosine-methyltransferase activity is inhibited by zinc. Functionally, RNA N6-methyltransferase that methylates adenosine residues at the N(6) position of a subset of RNAs and is involved in S-adenosyl-L-methionine homeostasis by regulating expression of MAT2A transcripts. Able to N6-methylate a subset of mRNAs and U6 small nuclear RNAs (U6 snRNAs). In contrast to the METTL3-METTL14 heterodimer, only able to methylate a limited number of RNAs: requires both a 5'UACAGAGAA-3' nonamer sequence and a specific RNA structure. Plays a key role in S-adenosyl-L-methionine homeostasis by mediating N6-methylation of MAT2A mRNAs, altering splicing of MAT2A transcripts: in presence of S-adenosyl-L-methionine, binds the 3'-UTR region of MAT2A mRNA and specifically N6-methylates the first hairpin of MAT2A mRNA, impairing MAT2A splicing and protein expression. In S-adenosyl-L-methionine-limiting conditions, binds the 3'-UTR region of MAT2A mRNA but stalls due to the lack of a methyl donor, preventing N6-methylation and promoting expression of MAT2A. In addition to mRNAs, also able to mediate N6-methylation of U6 small nuclear RNA (U6 snRNA): specifically N6-methylates adenine in position 43 of U6 snRNAs. The polypeptide is RNA N(6)-adenosine-methyltransferase mettl16 (mettl16) (Danio rerio (Zebrafish)).